The following is a 199-amino-acid chain: Hematopoietic prostaglandin D synthase (199 aa).

One can recognise a GST N-terminal domain in the interval 2-79 (PNYKLTYFNL…YLARESGLAG (78 aa)). Residues Tyr-8, Arg-14, Trp-39, 49–51 (GKV), and 63–64 (QS) each bind glutathione. Residues 81–199 (TPVEQALADA…WIQKRPKTAI (119 aa)) enclose the GST C-terminal domain.

Belongs to the GST superfamily. Sigma family. It depends on glutathione as a cofactor. Highly expressed in liver, kidney, small intestine and colon, moderately in pancreas, bone marrow, lung and ovary, and expressed at low levels in spleen, thymus, heart and brain. Not detected in oviduct or skin (at protein level). Expressed in liver.

The protein resides in the cytoplasm. The enzyme catalyses prostaglandin H2 = prostaglandin D2. It catalyses the reaction RX + glutathione = an S-substituted glutathione + a halide anion + H(+). It carries out the reaction 2-glyceryl-prostaglandin H2 = 2-glyceryl-prostaglandin D2. Bifunctional enzyme which catalyzes both the conversion of PGH2 to PGD2, a prostaglandin involved in smooth muscle contraction/relaxation and a potent inhibitor of platelet aggregation, and the conjugation of glutathione with a wide range of aryl halides, organic isothiocyanates and alpha,beta-unsaturated carbonyls. Also exhibits low glutathione-peroxidase activity towards cumene hydroperoxide and t-butyl hydroperoxide. In Gallus gallus (Chicken), this protein is Hematopoietic prostaglandin D synthase (HPGDS).